Here is a 109-residue protein sequence, read N- to C-terminus: Aquaporin-2 (109 aa).

Residues S1 to R6 are Cytoplasmic-facing. A helical membrane pass occupies residues A7–L27. Residues N28–S35 lie on the Extracellular side of the membrane. A helical membrane pass occupies residues V36 to L54. Residues G55 to G59 are Cytoplasmic-facing. The discontinuously helical intramembrane region spans A60 to A69. Positions N63–A65 match the NPA 1 motif. Residues C70 to R80 lie on the Cytoplasmic side of the membrane. Residues A81–L102 form a helical membrane-spanning segment. Residues T103–G109 are Extracellular-facing.

Belongs to the MIP/aquaporin (TC 1.A.8) family. Homotetramer. Serine phosphorylation is necessary and sufficient for expression at the apical membrane. Endocytosis is not phosphorylation-dependent. Post-translationally, N-glycosylated.

The protein localises to the apical cell membrane. The protein resides in the basolateral cell membrane. It is found in the cell membrane. It localises to the cytoplasmic vesicle membrane. Its subcellular location is the golgi apparatus. The protein localises to the trans-Golgi network membrane. It catalyses the reaction H2O(in) = H2O(out). It carries out the reaction glycerol(in) = glycerol(out). Its function is as follows. Forms a water-specific channel that provides the plasma membranes of renal collecting duct with high permeability to water, thereby permitting water to move in the direction of an osmotic gradient. Plays an essential role in renal water homeostasis. Could also be permeable to glycerol. This Amblysomus hottentotus (Hottentot golden mole) protein is Aquaporin-2.